A 251-amino-acid polypeptide reads, in one-letter code: Transmembrane ascorbate-dependent reductase CYB561 (251 aa).

Met1 carries the post-translational modification N-acetylmethionine. Residues 1-16 (MEGGAAAATPTALPYY) are Cytoplasmic-facing. The helical transmembrane segment at 17-37 (VAFSQLLGLTLVAMTGAWLGL) threads the bilayer. The 202-residue stretch at 19–220 (FSQLLGLTLV…FGGAVLYILT (202 aa)) folds into the Cytochrome b561 domain. The Vesicular portion of the chain corresponds to 38–51 (YRGGIAWESDLQFN). The helical transmembrane segment at 52–72 (AHPLCMVIGLIFLQGNALLVY) threads the bilayer. The heme b site is built by His53, Arg73, and Lys80. At 73-85 (RVFRNEAKRTTKV) the chain is on the cytoplasmic side. Positions 80 and 84 each coordinate L-ascorbate. A helical transmembrane segment spans residues 86–106 (LHGLLHIFALVIALVGLVAVF). Heme b-binding positions include His87, 116–119 (DLYS), and His121. At 107 to 124 (DYHRKKGYADLYSLHSWC) the chain is on the vesicular side. The helical transmembrane segment at 125 to 145 (GILVFVLYFVQWLVGFSFFLF) threads the bilayer. The Cytoplasmic portion of the chain corresponds to 146–158 (PGASFSLRSRYRP). Residue Arg153 participates in L-ascorbate binding. The helical transmembrane segment at 159 to 179 (QHIFFGATIFLLSVGTALLGL) threads the bilayer. Positions 160 and 181 each coordinate heme b. At 180–198 (KEALLFNLGGKYSAFEPEG) the chain is on the vesicular side. The chain crosses the membrane as a helical span at residues 199 to 219 (VLANVLGLLLACFGGAVLYIL). Topologically, residues 220–251 (TRADWKRPSQAEEQALSMDFKTLTEGDSPGSQ) are cytoplasmic. Residue Lys225 participates in heme b binding. Ser247 carries the post-translational modification Phosphoserine.

The cofactor is heme b. As to expression, expressed in many tissues, in particular the brain especially in the cortex and hippocampus.

The protein resides in the cytoplasmic vesicle. It is found in the secretory vesicle. Its subcellular location is the chromaffin granule membrane. It catalyses the reaction monodehydro-L-ascorbate radical(out) + L-ascorbate(in) = monodehydro-L-ascorbate radical(in) + L-ascorbate(out). Functionally, transmembrane reductase that uses ascorbate as an electron donor in the cytoplasm and transfers electrons across membranes to reduce monodehydro-L-ascorbate radical in the lumen of secretory vesicles. It is therefore involved the regeneration and homeostasis within secretory vesicles of ascorbate which in turn provides reducing equivalents needed to support the activity of intravesicular enzymes. In Homo sapiens (Human), this protein is Transmembrane ascorbate-dependent reductase CYB561.